The chain runs to 189 residues: Probable nicotinate-nucleotide adenylyltransferase (189 aa).

Belongs to the NadD family.

It catalyses the reaction nicotinate beta-D-ribonucleotide + ATP + H(+) = deamido-NAD(+) + diphosphate. Its pathway is cofactor biosynthesis; NAD(+) biosynthesis; deamido-NAD(+) from nicotinate D-ribonucleotide: step 1/1. Functionally, catalyzes the reversible adenylation of nicotinate mononucleotide (NaMN) to nicotinic acid adenine dinucleotide (NaAD). The sequence is that of Probable nicotinate-nucleotide adenylyltransferase from Caulobacter sp. (strain K31).